We begin with the raw amino-acid sequence, 238 residues long: Ribitol-5-phosphate cytidylyltransferase 2 (238 aa).

CTP contacts are provided by residues 7-10 (LAGG) and 81-87 (GTDRNET).

The protein belongs to the IspD/TarI cytidylyltransferase family. TarI subfamily. Heterodimer together with TarJ.

It carries out the reaction D-ribitol 5-phosphate + CTP + H(+) = CDP-L-ribitol + diphosphate. Its pathway is cell wall biogenesis; poly(ribitol phosphate) teichoic acid biosynthesis. Functionally, catalyzes the transfer of the cytidylyl group of CTP to D-ribitol 5-phosphate. The sequence is that of Ribitol-5-phosphate cytidylyltransferase 2 from Staphylococcus aureus (strain NCTC 8325 / PS 47).